A 233-amino-acid polypeptide reads, in one-letter code: Short chain dehydrogenase trt9 (233 aa).

Residues aspartate 33, arginine 95, tyrosine 127, lysine 131, and valine 160 each contribute to the NADP(+) site. Tyrosine 127 serves as the catalytic Proton donor. Residue lysine 131 is the Lowers pKa of active site Tyr of the active site.

Belongs to the short-chain dehydrogenases/reductases (SDR) family.

It functions in the pathway secondary metabolite biosynthesis; terpenoid biosynthesis. Short chain dehydrogenase; part of the gene cluster that mediates the biosynthesis of terretonin, a fungal meroterpenoid that acts as a mycotoxin. The first step of the pathway is the synthesis of 3,5-dimethylorsellinic acid (DMOA) by the polyketide synthase trt4. DMOA is then prenylated into farnesyl-DMOA by the polyprenyl transferase trt2. Methylation by the methyltransferase trt5 then leads to farnesyl-DMOA methyl ester which is further subject to epoxidation by the FAD-dependent monooxygenase trt8 to yield epoxyfarnesyl-DMOA methyl ester. Cyclization of epoxyfarnesyl-DMOA methyl ester by the terpene cyclase trt1 leads to a tetracycle intermediate which is in turn converted to preterretonin. Dehydrogenase trt9 comes next to transform preterretonin to preterrenoid. The FAD-dependent monooxygenase trt3 is then required for the C-hydroxylation at C16 of preterrenoid to yield terrenoid. The cytochrome P450 trt6 catalyzes three successive oxidations to transform terrenoid into an unstable intermediate, which then undergoes the D-ring expansion and unusual rearrangement of the methoxy group to afford the core skeleton of terretonin. Trt14 catalyzes the D-ring expansion of terretonin involving intramolecular methoxy rearrangement as well as the hydrolysis of the expanded D-ring and the methyl ester moiety. Finally, the nonheme iron-dependent dioxygenase trt7 accomplishes the last two oxidation reactions steps to complete the biosynthesis of terretonin. Terretonin C is produced via spontaneous decarboxylation of the terretonin precursor. Another shunt product of the terretonin biosynthesis is dihydrofarnesyl-DMOA, derived from epoxyfarnesyl-DMOA through hydrolysis of the epoxide. This Aspergillus terreus (strain NIH 2624 / FGSC A1156) protein is Short chain dehydrogenase trt9.